Reading from the N-terminus, the 186-residue chain is ATP synthase subunit delta (186 aa).

It belongs to the ATPase delta chain family. As to quaternary structure, F-type ATPases have 2 components, F(1) - the catalytic core - and F(0) - the membrane proton channel. F(1) has five subunits: alpha(3), beta(3), gamma(1), delta(1), epsilon(1). F(0) has three main subunits: a(1), b(2) and c(10-14). The alpha and beta chains form an alternating ring which encloses part of the gamma chain. F(1) is attached to F(0) by a central stalk formed by the gamma and epsilon chains, while a peripheral stalk is formed by the delta and b chains.

Its subcellular location is the cell inner membrane. F(1)F(0) ATP synthase produces ATP from ADP in the presence of a proton or sodium gradient. F-type ATPases consist of two structural domains, F(1) containing the extramembraneous catalytic core and F(0) containing the membrane proton channel, linked together by a central stalk and a peripheral stalk. During catalysis, ATP synthesis in the catalytic domain of F(1) is coupled via a rotary mechanism of the central stalk subunits to proton translocation. Its function is as follows. This protein is part of the stalk that links CF(0) to CF(1). It either transmits conformational changes from CF(0) to CF(1) or is implicated in proton conduction. In Fuscovulum blasticum (Rhodobacter blasticus), this protein is ATP synthase subunit delta.